A 214-amino-acid polypeptide reads, in one-letter code: MGQKTHPLGFRLGITQEHRSAWYADFKHYSTLLEEDDKIRTYLNKLAKLASISDIHINRNGLGDQIELNIETGRPGILVGDNGSGIKTLATNIKKFIPNNRQITINVVEVENVNANASLIADLVVQQLEDRVAFRRAIREALQCLQDNQVNGIKVEVSGRLNGAEMARSEWIREGRVPLQTLRADIDYATKEANTIYGVLGVKVWLFKNEILKK.

The KH type-2 domain maps to 39 to 111; that stretch reads IRTYLNKLAK…QITINVVEVE (73 aa).

This sequence belongs to the universal ribosomal protein uS3 family. Part of the 30S ribosomal subunit.

It localises to the plastid. The protein localises to the chloroplast. The chain is Small ribosomal subunit protein uS3c (rps3) from Thalassiosira pseudonana (Marine diatom).